Consider the following 1052-residue polypeptide: Error-prone DNA polymerase (1052 aa).

Belongs to the DNA polymerase type-C family. DnaE2 subfamily.

The protein localises to the cytoplasm. The enzyme catalyses DNA(n) + a 2'-deoxyribonucleoside 5'-triphosphate = DNA(n+1) + diphosphate. DNA polymerase involved in damage-induced mutagenesis and translesion synthesis (TLS). It is not the major replicative DNA polymerase. The polypeptide is Error-prone DNA polymerase (Bordetella bronchiseptica (strain ATCC BAA-588 / NCTC 13252 / RB50) (Alcaligenes bronchisepticus)).